We begin with the raw amino-acid sequence, 363 residues long: Dihydroorotate dehydrogenase (quinone) (363 aa).

FMN-binding positions include 67–71 and Thr-91; that span reads AGFDK. Lys-71 is a substrate binding site. A substrate-binding site is contributed by 116–120; sequence NRMGF. Residues Asn-156 and Asn-189 each contribute to the FMN site. Position 189 (Asn-189) interacts with substrate. Ser-192 acts as the Nucleophile in catalysis. Asn-194 contacts substrate. FMN is bound by residues Lys-231 and Thr-259. 260–261 is a binding site for substrate; it reads NT. Residues Gly-287, Gly-316, and 337 to 338 contribute to the FMN site; that span reads YT.

It belongs to the dihydroorotate dehydrogenase family. Type 2 subfamily. As to quaternary structure, monomer. FMN serves as cofactor.

It localises to the cell membrane. It carries out the reaction (S)-dihydroorotate + a quinone = orotate + a quinol. Its pathway is pyrimidine metabolism; UMP biosynthesis via de novo pathway; orotate from (S)-dihydroorotate (quinone route): step 1/1. Catalyzes the conversion of dihydroorotate to orotate with quinone as electron acceptor. The protein is Dihydroorotate dehydrogenase (quinone) of Kocuria rhizophila (strain ATCC 9341 / DSM 348 / NBRC 103217 / DC2201).